A 213-amino-acid chain; its full sequence is NADH dehydrogenase [ubiquinone] iron-sulfur protein 7, mitochondrial (213 aa).

Residues 1-31 constitute a mitochondrion transit peptide; that stretch reads MALIARNAKLLTGTAPFLQRAATIHTTLPSL. Positions 30-42 are enriched in low complexity; sequence SLSQQPASSPATS. The disordered stretch occupies residues 30–52; it reads SLSQQPASSPATSGGAQPPSMNT. [4Fe-4S] cluster-binding residues include Cys-88, Cys-89, Cys-153, and Cys-183.

It belongs to the complex I 20 kDa subunit family. Complex I is composed of about 45 different subunits. This is a component of the iron-sulfur (IP) fragment of the enzyme. It depends on [4Fe-4S] cluster as a cofactor.

It is found in the mitochondrion. It carries out the reaction a ubiquinone + NADH + 5 H(+)(in) = a ubiquinol + NAD(+) + 4 H(+)(out). Its function is as follows. Core subunit of the mitochondrial membrane respiratory chain NADH dehydrogenase (Complex I) that is believed to belong to the minimal assembly required for catalysis. Complex I functions in the transfer of electrons from NADH to the respiratory chain. The immediate electron acceptor for the enzyme is believed to be ubiquinone. The polypeptide is NADH dehydrogenase [ubiquinone] iron-sulfur protein 7, mitochondrial (Solanum tuberosum (Potato)).